The chain runs to 292 residues: Succinate dehydrogenase assembly factor 2, mitochondrial (292 aa).

Disordered regions lie at residues R27–S68 and T266–S292. The span at T55–S68 shows a compositional bias: polar residues.

The protein belongs to the SDHAF2 family. Interacts with the flavoprotein subunit within the SDH catalytic dimer.

The protein localises to the mitochondrion matrix. Its function is as follows. Plays an essential role in the assembly of succinate dehydrogenase (SDH), an enzyme complex (also referred to as respiratory complex II) that is a component of both the tricarboxylic acid (TCA) cycle and the mitochondrial electron transport chain, and which couples the oxidation of succinate to fumarate with the reduction of ubiquinone (coenzyme Q) to ubiquinol. Required for flavinylation (covalent attachment of FAD) of the flavoprotein subunit of the SDH catalytic dimer. The chain is Succinate dehydrogenase assembly factor 2, mitochondrial from Aspergillus flavus (strain ATCC 200026 / FGSC A1120 / IAM 13836 / NRRL 3357 / JCM 12722 / SRRC 167).